The sequence spans 407 residues: Serine hydroxymethyltransferase (407 aa).

(6S)-5,6,7,8-tetrahydrofolate contacts are provided by residues Leu117 and 121–123; that span reads GHL. Residue Lys226 is modified to N6-(pyridoxal phosphate)lysine. Position 242 (Glu242) interacts with (6S)-5,6,7,8-tetrahydrofolate.

The protein belongs to the SHMT family. In terms of assembly, homodimer. The cofactor is pyridoxal 5'-phosphate.

It is found in the cytoplasm. The catalysed reaction is (6R)-5,10-methylene-5,6,7,8-tetrahydrofolate + glycine + H2O = (6S)-5,6,7,8-tetrahydrofolate + L-serine. It participates in one-carbon metabolism; tetrahydrofolate interconversion. It functions in the pathway amino-acid biosynthesis; glycine biosynthesis; glycine from L-serine: step 1/1. Its function is as follows. Catalyzes the reversible interconversion of serine and glycine with tetrahydrofolate (THF) serving as the one-carbon carrier. This reaction serves as the major source of one-carbon groups required for the biosynthesis of purines, thymidylate, methionine, and other important biomolecules. Also exhibits THF-independent aldolase activity toward beta-hydroxyamino acids, producing glycine and aldehydes, via a retro-aldol mechanism. This is Serine hydroxymethyltransferase from Thermus thermophilus (strain ATCC BAA-163 / DSM 7039 / HB27).